Consider the following 68-residue polypeptide: Conotoxin ba14a (68 aa).

The first 20 residues, 1-20 (MKLSVMFIVALVLSLSMTDG), serve as a signal peptide directing secretion. Positions 21–50 (LPRRAENGGRIFRQHSPDSMDPQTRQIKTR) are excised as a propeptide.

Contains 2 disulfide bonds. As to expression, expressed by the venom duct.

The protein resides in the secreted. The chain is Conotoxin ba14a from Conus bayani (Bayan's cone).